The primary structure comprises 569 residues: DNA-binding protein eta2 (569 aa).

2 disordered regions span residues 1–26 (MMLA…TLSC) and 133–159 (KRKI…AKKR). Polar residues predominate over residues 9–26 (INENQGTRSNLESPTLSC). Ser21 bears the Phosphoserine mark. Myb-like domains are found at residues 322 to 371 (LDPK…RFVV) and 377 to 459 (ETID…EKTI). Residues 459–487 (IASYSSNQRQEEDQGKKRKKRKKKKSKGK) are disordered. A compositionally biased stretch (basic residues) spans 474–487 (KKRKKRKKKKSKGK).

It is found in the nucleus. In Schizosaccharomyces pombe (strain 972 / ATCC 24843) (Fission yeast), this protein is DNA-binding protein eta2 (eta2).